Here is a 415-residue protein sequence, read N- to C-terminus: Tyrosine--tRNA ligase (415 aa).

Residues 54 to 63 carry the 'HIGH' region motif; that stretch reads PTGSNIHLGH. The 'KMSKS' region signature appears at 248-252; the sequence is KMSKT. K251 serves as a coordination point for ATP. Residues 351-415 form the S4 RNA-binding domain; that stretch reads AKAFYLMSAV…GKKTFRRLTA (65 aa).

The protein belongs to the class-I aminoacyl-tRNA synthetase family. TyrS type 2 subfamily. Homodimer.

The protein localises to the cytoplasm. The catalysed reaction is tRNA(Tyr) + L-tyrosine + ATP = L-tyrosyl-tRNA(Tyr) + AMP + diphosphate + H(+). Catalyzes the attachment of tyrosine to tRNA(Tyr) in a two-step reaction: tyrosine is first activated by ATP to form Tyr-AMP and then transferred to the acceptor end of tRNA(Tyr). The protein is Tyrosine--tRNA ligase of Synechococcus sp. (strain CC9902).